We begin with the raw amino-acid sequence, 208 residues long: uncharacterized protein (208 aa).

The signal sequence occupies residues 1–16; it reads MKFLLIACLAVPAILA. Asn79 carries N-linked (GlcNAc...) asparagine glycosylation.

This is an uncharacterized protein from Caenorhabditis elegans.